Consider the following 350-residue polypeptide: Biotin synthase (350 aa).

The Radical SAM core domain maps to 38 to 256; it reads NYVQVSTLLS…IAVARIMMPE (219 aa). Positions 53, 57, and 60 each coordinate [4Fe-4S] cluster. The [2Fe-2S] cluster site is built by C97, C128, C188, and R260.

Belongs to the radical SAM superfamily. Biotin synthase family. As to quaternary structure, homodimer. The cofactor is [4Fe-4S] cluster. Requires [2Fe-2S] cluster as cofactor.

It catalyses the reaction (4R,5S)-dethiobiotin + (sulfur carrier)-SH + 2 reduced [2Fe-2S]-[ferredoxin] + 2 S-adenosyl-L-methionine = (sulfur carrier)-H + biotin + 2 5'-deoxyadenosine + 2 L-methionine + 2 oxidized [2Fe-2S]-[ferredoxin]. Its pathway is cofactor biosynthesis; biotin biosynthesis; biotin from 7,8-diaminononanoate: step 2/2. In terms of biological role, catalyzes the conversion of dethiobiotin (DTB) to biotin by the insertion of a sulfur atom into dethiobiotin via a radical-based mechanism. This Aliivibrio salmonicida (strain LFI1238) (Vibrio salmonicida (strain LFI1238)) protein is Biotin synthase.